We begin with the raw amino-acid sequence, 182 residues long: Transcription termination/antitermination protein NusG (182 aa).

The region spanning 131–161 (GEVVRVNDGPFADFNGTVEEVDYEKSRLKVS) is the KOW domain.

The protein belongs to the NusG family.

Participates in transcription elongation, termination and antitermination. The chain is Transcription termination/antitermination protein NusG from Vibrio cholerae serotype O1 (strain ATCC 39315 / El Tor Inaba N16961).